The primary structure comprises 308 residues: Isochorismatase domain-containing protein 1 (308 aa).

This sequence belongs to the isochorismatase family.

The chain is Isochorismatase domain-containing protein 1 (isoc1) from Xenopus tropicalis (Western clawed frog).